The sequence spans 76 residues: Rhesus theta defensin-1/2 subunit B (76 aa).

Positions 1–22 (MRTFALLTAMLLLVALHAQAEA) are cleaved as a signal peptide. Residues 23 to 64 (RQARADEAAAQQQPGADDQGMAHSFTRPENAALPLSESARGL) constitute a propeptide that is removed on maturation. A disordered region spans residues 25–54 (ARADEAAAQQQPGADDQGMAHSFTRPENAA). Low complexity predominate over residues 30-44 (AAAQQQPGADDQGMA). Residue Arg-65 forms a Cyclopeptide (Arg-Cys) (interchain with C-73 in subunit A); in form RTD-1 linkage. Residue Arg-65 forms a Cyclopeptide (Arg-Cys) (interchain with C-73 in subunit B); in form RTD-2 linkage. An intrachain disulfide couples Cys-68 to Cys-73. Cys-73 participates in a covalent cross-link: Cyclopeptide (Cys-Arg) (interchain with R-65 in subunit A); in form RTD-1. Cys-73 participates in a covalent cross-link: Cyclopeptide (Cys-Arg) (interchain with R-65 in subunit B); in form RTD-2. Residues 74–76 (QLL) constitute a propeptide that is removed on maturation.

It belongs to the alpha-defensin family. Theta subfamily. RTD-1 is a cyclic heterodimer composed of subunits A and B; disulfide-linked. RTD-2 is a cyclic homodimer composed of two subunits B; disulfide-linked. In terms of processing, forms a cyclic peptide with 1 subunit B (RTD-2) or with 1 subunit A (RTD-1). An additional intersubunit disulfide bond is formed. As to expression, RTD-1 is expressed in bone marrow. Detected in promyelocytes, myelocytes and mature neutrophils and monocytes.

In terms of biological role, RTD-1 and RTD-2 have similar antimicrobial activities against the Gram-positive bacteria S.aureus 502A and L.monocytogenes, the Gram-negative bacterium S.typhimurium, and the fungi C.albicans 16820 and C.neoformans 271A. RTD-2 is 2-3-fold less active than RTD-1 against E.coli ML35. The polypeptide is Rhesus theta defensin-1/2 subunit B (RTD1B) (Macaca mulatta (Rhesus macaque)).